The primary structure comprises 869 residues: Leucine--tRNA ligase (869 aa).

The 'HIGH' region motif lies at 42–52 (PYPSGRLHMGH). Positions 620–624 (KMSKS) match the 'KMSKS' region motif. Lys-623 is a binding site for ATP.

Belongs to the class-I aminoacyl-tRNA synthetase family.

Its subcellular location is the cytoplasm. It carries out the reaction tRNA(Leu) + L-leucine + ATP = L-leucyl-tRNA(Leu) + AMP + diphosphate. The chain is Leucine--tRNA ligase from Hamiltonella defensa subsp. Acyrthosiphon pisum (strain 5AT).